The chain runs to 315 residues: MVGWAIALHGGAGDIPIDLPDERRIPRESALRHCLDLGISALKSGKPPLDVAELVVRELENHPDFNAGKGSVLTAQGTVEMEASIMDGKTKRCGAVSGLTTVVNPISLARLVMEKTPHIYLAFDAAEAFARAHGVETVDSSHFITPENIARLKQAKEFNRVQLDYTVPSPKVPDNCGDSQIGTVGCVAVDSAGNLASATSTGGYVNKMVGRIGDTPVIGAGTYANHLCAISATGKGEDIIRGTVARDVAALMEYKGLSLTEAAAYVVDQSVPRGSCGLVAVSANGEVTMPFNTTGMFRACASEDGYSEIAIWPNN.

Serine 169 carries the phosphoserine modification. The active-site Nucleophile is the threonine 183. Substrate contacts are provided by residues 211–214 and 233–236; these read RIGD and TGKG.

Belongs to the Ntn-hydrolase family. Heterotetramer of two alpha and two beta chains arranged as a dimer of alpha/beta heterodimers. In terms of processing, cleaved into an alpha and beta chain by autocatalysis; this activates the enzyme. The N-terminal residue of the beta subunit is responsible for the nucleophile hydrolase activity.

It catalyses the reaction Cleavage of a beta-linked Asp residue from the N-terminus of a polypeptide.. Acts in asparagine catabolism but also in the final steps of protein and degradation via hydrolysis of a range of isoaspartyl dipeptides. The affinity for Asn and at least 4 isoaspartyl dipeptides (L-beta-Asp-Ala, L-beta-Asp-Gly, L-beta-Asp-Leu, L-beta-Asp-Phe) is quite low, KM being greater than 4.0 mM. The enzyme is inactive on alpha-aspartyl dipeptides. The chain is Isoaspartyl peptidase/L-asparaginase 1 from Arabidopsis thaliana (Mouse-ear cress).